A 136-amino-acid chain; its full sequence is MRNVKKALSRSVIASSIQGTTKTNGGHRSRHSSGIFLPQIYLSKGNGAYPHTFQKAEFVARATLRNKAHLRTNKGGFHPLVVVVEPLSRLLSVGKFLQNKPTEKIKMKTSQKSTALLAVRSRTPIVFAPAMEVTYA.

This is an uncharacterized protein from Pasteurella multocida (strain Pm70).